Here is a 405-residue protein sequence, read N- to C-terminus: Plasma serine protease inhibitor (405 aa).

The signal sequence occupies residues 1-19 (MRFFPILCLVLFISHGVAS). Positions 20 to 24 (RRHSH) are cleaved as a propeptide — removed in mature form. N247 carries an N-linked (GlcNAc...) asparagine glycan.

It belongs to the serpin family. In terms of assembly, forms protease inhibiting heterodimers in extracellular body fluids with serine proteases such as activated protein C/coagulation factor V/F5, acrosin/ACR, chymotrypsinogen B/CTRB1, prothrombin/F2, factor Xa/F10, factor XI/F11, kallikrein/KLKB1, tissue kallikrein, trypsin/PRSS1, prostate specific antigen/KLK3, tissue plasminogen activator/PLAT and urinary plasminogen activator/PLAU. Forms membrane-anchored serine proteases inhibiting heterodimers with TMPRSS7 and TMPRSS11E. Interacts with SEMG2. N-glycosylated; glycans consist of a mixture of sialylated bi- (including sialyl-Lewis X epitopes), tri- and tetra-antennary complex-type chains; affects the maximal heparin- and thrombomodulin-enhanced rates of thrombin inhibition. O-glycosylated; further modified with 2 sialic acid residues. Proteolytically cleaved at the N-terminus; inhibits slightly the heparin- and thrombomodulin-enhanced rates of thrombin inhibition. In terms of processing, proteolytically cleaved. Inhibition of proteases is accompanied by formation of a stable enzyme-inhibitor complex and by degradation of the serpin to lower molecular weight derivatives. As to expression, not detected in blood plasma (at protein level). Expressed in testis, epididymis, seminal vesicles, prostate and ovaries.

It localises to the secreted. The protein localises to the extracellular space. Its inhibitory activity is greatly enhanced in the presence of glycosaminoglycans, heparin, thrombomodulin and phospholipids vesicles. Functionally, heparin-dependent serine protease inhibitor acting in body fluids and secretions. Inactivates serine proteases by binding irreversibly to their serine activation site. Involved in the regulation of intravascular and extravascular proteolytic activities. Plays hemostatic roles in the blood plasma. Acts as a procoagulant and pro-inflammatory factor by inhibiting the anticoagulant activated protein C factor as well as the generation of activated protein C factor by the thrombin/thrombomodulin complex. Acts as an anticoagulant factor by inhibiting blood coagulation factors like prothrombin, factor XI, factor Xa, plasma kallikrein and fibrinolytic enzymes such as tissue- and urinary-type plasminogen activators. In seminal plasma, inactivates several serine proteases implicated in the reproductive system. Inhibits the serpin acrosin; indirectly protects component of the male genital tract from being degraded by excessive released acrosin. Inhibits tissue- and urinary-type plasminogen activator, prostate-specific antigen and kallikrein activities; has a control on the sperm motility and fertilization. Inhibits the activated protein C-catalyzed degradation of SEMG1 and SEMG2; regulates the degradation of semenogelin during the process of transfer of spermatozoa from the male reproductive tract into the female tract. In urine, inhibits urinary-type plasminogen activator and kallikrein activities. Inactivates membrane-anchored serine proteases activities such as MPRSS7 and TMPRSS11E. Inhibits urinary-type plasminogen activator-dependent tumor cell invasion and metastasis. May also play a non-inhibitory role in seminal plasma and urine as a hydrophobic hormone carrier by its binding to retinoic acid. The chain is Plasma serine protease inhibitor (Serpina5) from Mus musculus (Mouse).